Here is a 565-residue protein sequence, read N- to C-terminus: UvrABC system protein C (565 aa).

A GIY-YIG domain is found at 12 to 89 (EEPGVYIFKN…IRTHKPKYNV (78 aa)). Residues 195 to 230 (KDVLPTLYEKIEQYASNLAFEKAAFLRDQVLVLQNI) form the UVR domain.

Belongs to the UvrC family. As to quaternary structure, interacts with UvrB in an incision complex.

The protein localises to the cytoplasm. Its function is as follows. The UvrABC repair system catalyzes the recognition and processing of DNA lesions. UvrC both incises the 5' and 3' sides of the lesion. The N-terminal half is responsible for the 3' incision and the C-terminal half is responsible for the 5' incision. The polypeptide is UvrABC system protein C (Hydrogenobaculum sp. (strain Y04AAS1)).